Reading from the N-terminus, the 492-residue chain is 6-phosphogluconate dehydrogenase, decarboxylating 2 (492 aa).

NADP(+) contacts are provided by residues 12–17 (GLAVMG), 35–37 (NRT), 77–79 (IKA), and asparagine 105. Residues asparagine 105 and 131–133 (SGG) contribute to the substrate site. The Proton acceptor role is filled by lysine 185. Residue 188-189 (HN) coordinates substrate. The active-site Proton donor is the glutamate 192. Residues tyrosine 193, lysine 262, arginine 289, arginine 449, and histidine 455 each coordinate substrate.

Belongs to the 6-phosphogluconate dehydrogenase family. As to quaternary structure, homodimer.

The catalysed reaction is 6-phospho-D-gluconate + NADP(+) = D-ribulose 5-phosphate + CO2 + NADPH. Its pathway is carbohydrate degradation; pentose phosphate pathway; D-ribulose 5-phosphate from D-glucose 6-phosphate (oxidative stage): step 3/3. In terms of biological role, catalyzes the oxidative decarboxylation of 6-phosphogluconate to ribulose 5-phosphate and CO(2), with concomitant reduction of NADP to NADPH. In Saccharomyces cerevisiae (strain ATCC 204508 / S288c) (Baker's yeast), this protein is 6-phosphogluconate dehydrogenase, decarboxylating 2 (GND2).